Here is a 344-residue protein sequence, read N- to C-terminus: tRNA N6-adenosine threonylcarbamoyltransferase (344 aa).

Positions 110 and 114 each coordinate Fe cation. Substrate contacts are provided by residues 133-137 (VMSGA), aspartate 166, glycine 179, and asparagine 278. Aspartate 303 is a binding site for Fe cation.

Belongs to the KAE1 / TsaD family. Requires Fe(2+) as cofactor.

Its subcellular location is the cytoplasm. The catalysed reaction is L-threonylcarbamoyladenylate + adenosine(37) in tRNA = N(6)-L-threonylcarbamoyladenosine(37) in tRNA + AMP + H(+). Functionally, required for the formation of a threonylcarbamoyl group on adenosine at position 37 (t(6)A37) in tRNAs that read codons beginning with adenine. Is involved in the transfer of the threonylcarbamoyl moiety of threonylcarbamoyl-AMP (TC-AMP) to the N6 group of A37, together with TsaE and TsaB. TsaD likely plays a direct catalytic role in this reaction. The polypeptide is tRNA N6-adenosine threonylcarbamoyltransferase (Chlamydia felis (strain Fe/C-56) (Chlamydophila felis)).